A 370-amino-acid polypeptide reads, in one-letter code: Luciferin sulfotransferase (370 aa).

3'-phosphoadenylyl sulfate is bound at residue K90–W95. H165 serves as the catalytic Proton acceptor. Residues R189, S197, Y250, L284–M289, and F316–G320 contribute to the 3'-phosphoadenylyl sulfate site.

The protein belongs to the sulfotransferase 1 family.

The enzyme catalyses firefly D-luciferin + 3'-phosphoadenylyl sulfate = firefly D-sulfoluciferin + adenosine 3',5'-bisphosphate + H(+). It catalyses the reaction firefly L-luciferin + 3'-phosphoadenylyl sulfate = firefly L-sulfoluciferin + adenosine 3',5'-bisphosphate + H(+). With respect to regulation, sulfoluciferin formation is inhibited by the product adenosine 3',5'-bisphosphate. Catalyzes the production of firefly sulfoluciferin from luciferin using the sulfo-donor 3'-phosphoadenylyl sulfate (PAPS). Is also able to catalyze the reverse reaction, i.e. the adenosine 3',5'-bisphosphate-dependent desulfonation of sulfoluciferin. Can use either D- or L-luciferin stereoisomer as substrate. Sulfoluciferin, which is not a substrate of P.pyralis luciferase, likely serves as a luciferin storage form in fireflies. The chain is Luciferin sulfotransferase from Photinus pyralis (Common eastern firefly).